We begin with the raw amino-acid sequence, 378 residues long: Holliday junction branch migration complex subunit RuvB 1 (378 aa).

Residues 1-12 (MAIISSRDTGQN) show a composition bias toward polar residues. Residues 1–62 (MAIISSRDTG…PGEAQEESLR (62 aa)) are disordered. The large ATPase domain (RuvB-L) stretch occupies residues 13-222 (AEGPKRRQQK…FGHVQRLRFY (210 aa)). ATP contacts are provided by residues leucine 61, arginine 62, glycine 103, lysine 106, threonine 107, threonine 108, 169–171 (EDF), arginine 212, tyrosine 222, and arginine 259. Threonine 107 contacts Mg(2+). The small ATPAse domain (RuvB-S) stretch occupies residues 223–293 (EPHELVQIVL…VAAAALELFQ (71 aa)). A head domain (RuvB-H) region spans residues 296–378 (PMGLDWIDRK…EAQSPLPLWS (83 aa)). DNA is bound by residues arginine 351 and arginine 356.

Belongs to the RuvB family. In terms of assembly, homohexamer. Forms an RuvA(8)-RuvB(12)-Holliday junction (HJ) complex. HJ DNA is sandwiched between 2 RuvA tetramers; dsDNA enters through RuvA and exits via RuvB. An RuvB hexamer assembles on each DNA strand where it exits the tetramer. Each RuvB hexamer is contacted by two RuvA subunits (via domain III) on 2 adjacent RuvB subunits; this complex drives branch migration. In the full resolvosome a probable DNA-RuvA(4)-RuvB(12)-RuvC(2) complex forms which resolves the HJ.

Its subcellular location is the cytoplasm. The catalysed reaction is ATP + H2O = ADP + phosphate + H(+). In terms of biological role, the RuvA-RuvB-RuvC complex processes Holliday junction (HJ) DNA during genetic recombination and DNA repair, while the RuvA-RuvB complex plays an important role in the rescue of blocked DNA replication forks via replication fork reversal (RFR). RuvA specifically binds to HJ cruciform DNA, conferring on it an open structure. The RuvB hexamer acts as an ATP-dependent pump, pulling dsDNA into and through the RuvAB complex. RuvB forms 2 homohexamers on either side of HJ DNA bound by 1 or 2 RuvA tetramers; 4 subunits per hexamer contact DNA at a time. Coordinated motions by a converter formed by DNA-disengaged RuvB subunits stimulates ATP hydrolysis and nucleotide exchange. Immobilization of the converter enables RuvB to convert the ATP-contained energy into a lever motion, pulling 2 nucleotides of DNA out of the RuvA tetramer per ATP hydrolyzed, thus driving DNA branch migration. The RuvB motors rotate together with the DNA substrate, which together with the progressing nucleotide cycle form the mechanistic basis for DNA recombination by continuous HJ branch migration. Branch migration allows RuvC to scan DNA until it finds its consensus sequence, where it cleaves and resolves cruciform DNA. The polypeptide is Holliday junction branch migration complex subunit RuvB 1 (Synechococcus sp. (strain JA-3-3Ab) (Cyanobacteria bacterium Yellowstone A-Prime)).